The following is a 100-amino-acid chain: MHLTSREQEKLMLFLAGELAAKRKARGVKLNYPETIAYIASHLQEAARDGMSVAEVMQYGSTLLTVDDVMEGVAEMVHEVQIEATFPDGTKLVTVHNPIR.

This sequence belongs to the urease gamma subunit family. Heterotrimer of UreA (gamma), UreB (beta) and UreC (alpha) subunits. Three heterotrimers associate to form the active enzyme.

The protein resides in the cytoplasm. It carries out the reaction urea + 2 H2O + H(+) = hydrogencarbonate + 2 NH4(+). It functions in the pathway nitrogen metabolism; urea degradation; CO(2) and NH(3) from urea (urease route): step 1/1. This chain is Urease subunit gamma, found in Haemophilus influenzae (strain PittEE).